A 334-amino-acid chain; its full sequence is MGKYFYLYENISKVGPYDGPQYYLAPTWAFYLQAAFMGFVFFVGTPLNFVVLLATAKYKKLRVPLNYILVNITFAGFIFVTFSVSQVFLASVRGYYFFGQTLCALEAAVGAVAGLVTSWSLAVLSFERYLVICKPFGAFKFGSNHALAAVIFTWFMGVVRCPPFFGWSRYIPEGLGCSCGPDWYTNCEEFSCASYSKFLLVTCFICPITIIIFSYSQLLGALRAVAAQQAESASTQKAEKEVSRMIIVMVASFVTCYGPYALTAQYYAYSQDENKDYRLVTIPAFFSKSSCVYNPLIYAFMNKQFNGCIMEMVFGKKMEEASEVSSKTEVSTDS.

Residues Met1–Ala29 lie on the Extracellular side of the membrane. N-linked (GlcNAc...) asparagine glycosylation is present at Asn10. Residues Phe30–Ala54 traverse the membrane as a helical segment. The Cytoplasmic segment spans residues Thr55–Asn66. The chain crosses the membrane as a helical span at residues Tyr67–Phe88. Residues Leu89–Glu106 are Extracellular-facing. A disulfide bond links Cys103 and Cys179. A helical membrane pass occupies residues Ala107–Phe126. The Cytoplasmic segment spans residues Glu127–His145. The chain crosses the membrane as a helical span at residues Ala146 to Ser168. Residues Arg169–Ser194 are Extracellular-facing. The chain crosses the membrane as a helical span at residues Tyr195 to Leu222. At Arg223–Arg244 the chain is on the cytoplasmic side. The helical transmembrane segment at Met245–Asp272 threads the bilayer. The Extracellular portion of the chain corresponds to Glu273–Leu279. Residues Val280–Met301 form a helical membrane-spanning segment. Position 288 is an N6-(retinylidene)lysine (Lys288). Over Asn302–Ser334 the chain is Cytoplasmic.

Belongs to the G-protein coupled receptor 1 family. Opsin subfamily. Phosphorylated on some or all of the serine and threonine residues present in the C-terminal region. In terms of tissue distribution, the three color pigments are found in the cone photoreceptor cells.

It localises to the membrane. Functionally, visual pigments are the light-absorbing molecules that mediate vision. They consist of an apoprotein, opsin, covalently linked to cis-retinal. The polypeptide is Putative violet-sensitive opsin (Oryzias latipes (Japanese rice fish)).